The sequence spans 498 residues: Pup deamidase/depupylase (498 aa).

6–10 lines the ATP pocket; the sequence is GTEVE. Mg(2+) contacts are provided by Glu-8 and Tyr-93. Residue Asp-95 is the Proton acceptor of the active site. Glu-100 provides a ligand contact to Mg(2+). An ATP-binding site is contributed by 102 to 103; that stretch reads SA. Mg(2+) is bound at residue His-156. Positions 158 and 240 each coordinate ATP. Mg(2+) is bound at residue His-242.

The protein belongs to the Pup ligase/Pup deamidase family. Pup deamidase subfamily. ATP serves as cofactor.

It carries out the reaction [prokaryotic ubiquitin-like protein]-C-terminal-L-glutamine + H2O = [prokaryotic ubiquitin-like protein]-C-terminal-L-glutamate + NH4(+). It participates in protein degradation; proteasomal Pup-dependent pathway. Functionally, specifically catalyzes the deamidation of the C-terminal glutamine of the prokaryotic ubiquitin-like protein Pup to glutamate, thereby rendering Pup competent for conjugation. Probably also displays depupylase (DPUP) activity, removing conjugated Pup from target proteins; thus may be involved in the recycling of Pup and may function similarly to deubiquitinases (DUBs) in eukaryotes to prevent or promote proteasomal degradation of certain proteins. The polypeptide is Pup deamidase/depupylase (dop) (Mycolicibacterium smegmatis (strain ATCC 700084 / mc(2)155) (Mycobacterium smegmatis)).